A 625-amino-acid chain; its full sequence is ATP-dependent RNA helicase mrh4, mitochondrial (625 aa).

The transit peptide at 1-16 (MWKTARDSVCLICRSA) directs the protein to the mitochondrion. A compositionally biased stretch (low complexity) spans 19–28 (TTTSTSARAS). The interval 19–119 (TTTSTSARAS…DKNTKGQKAL (101 aa)) is disordered. Residues 90–113 (DPRKAPKPKPVEEDSRRDKRDKNT) are compositionally biased toward basic and acidic residues. Residues 144–177 (QAFDQFDLLPVVKEAIAQEALKGMTEIKPTPVQR) carry the Q motif motif. The Helicase ATP-binding domain maps to 195 to 406 (PKSDNGREEF…EEQFPYINRI (212 aa)). Residue 208 to 215 (AETGSGKT) participates in ATP binding. The short motif at 353-356 (DEAD) is the DEAD box element. Positions 453-625 (EGPKSEIDVK…ESMFMGQALV (173 aa)) constitute a Helicase C-terminal domain.

This sequence belongs to the DEAD box helicase family. MRH4 subfamily.

It localises to the mitochondrion. The enzyme catalyses ATP + H2O = ADP + phosphate + H(+). ATP-binding RNA helicase involved in mitochondrial RNA metabolism. Required for maintenance of mitochondrial DNA. The chain is ATP-dependent RNA helicase mrh4, mitochondrial (drh-15) from Neurospora crassa (strain ATCC 24698 / 74-OR23-1A / CBS 708.71 / DSM 1257 / FGSC 987).